A 338-amino-acid polypeptide reads, in one-letter code: MRFKGLDLNLLVALDALMTERNLTAAARKINLSQPAMSAAIARLRSYFRDELFTMRGRELVLTPGAEALAGPVREALLHIQLSIISRDAFDPAQSSRRFRVILSDFMTIVFFRRIVDRIAQEAPAVRFELLPFSDEPSELLRRGEVDFLILPELFMSSAHPKATLFDETLVCVGCPTNKQLSRPLTFEKYNSMGHVTAQFGRALRPNLEEWFLLEHGLKRRIEVVVQGFSLIPPILLDTSRIGTMPLRLARHFEKRMPLQIVEPPLPLPTFTEAVQWPAFHNTDPASIWMRRILLEEASNMASEHREPPTPQARLDSRPRRCKNILINHSTAWPASSF.

The region spanning 6–63 is the HTH lysR-type domain; that stretch reads LDLNLLVALDALMTERNLTAAARKINLSQPAMSAAIARLRSYFRDELFTMRGRELVLT. Residues 23 to 42 constitute a DNA-binding region (H-T-H motif); the sequence is LTAAARKINLSQPAMSAAIA.

It belongs to the LysR transcriptional regulatory family.

In terms of biological role, nodD regulates the expression of the nodABCFE genes which encode other nodulation proteins. NodD is also a negative regulator of its own expression. Binds flavonoids as inducers. The protein is Nodulation protein D (nodD) of Bradyrhizobium sp. (strain ANU 289).